Here is a 209-residue protein sequence, read N- to C-terminus: Uridine kinase (209 aa).

12-19 contacts ATP; sequence GGSGGGKT.

This sequence belongs to the uridine kinase family.

It is found in the cytoplasm. It carries out the reaction uridine + ATP = UMP + ADP + H(+). The enzyme catalyses cytidine + ATP = CMP + ADP + H(+). It functions in the pathway pyrimidine metabolism; CTP biosynthesis via salvage pathway; CTP from cytidine: step 1/3. Its pathway is pyrimidine metabolism; UMP biosynthesis via salvage pathway; UMP from uridine: step 1/1. This Streptococcus agalactiae serotype III (strain NEM316) protein is Uridine kinase.